The primary structure comprises 240 residues: Homeobox protein notochord (240 aa).

A compositionally biased stretch (polar residues) spans 1–13 (MSSPAPSGTQVQP). Disordered stretches follow at residues 1–21 (MSSPAPSGTQVQPGSLRPCPG) and 208–240 (QKLKLPSSSVMEEPSSSSDGNIQSEDAELGIGS). The segment at residues 149–208 (TKRVRTTFNLQQLQELEKVFAKQHNLVGKERAQLAARLHLTENQVRIWFQNRRVKYQKQQ) is a DNA-binding region (homeobox). Residues 213–225 (PSSSVMEEPSSSS) are compositionally biased toward low complexity.

It localises to the nucleus. Functionally, transcription factor that controls node morphogenesis. Acts downstream of both FOXA2 and Brachyury (T) during notochord development. Is essential for cilia formation in the posterior notochord (PNC) and for left-right patterning; acts upstream of FOXJ1 and RFX3 in this process and is required for the expression of various components important for axonemal assembly and function. Plays a role in regulating axial versus paraxial cell fate. Activates the transcription of ciliary proteins C11orf97 homolog, FAM183B and SPACA9 in the embryonic ventral node. This Mus musculus (Mouse) protein is Homeobox protein notochord (Noto).